Here is a 344-residue protein sequence, read N- to C-terminus: Heat-inducible transcription repressor HrcA (344 aa).

Belongs to the HrcA family.

Its function is as follows. Negative regulator of class I heat shock genes (grpE-dnaK-dnaJ and groELS operons). Prevents heat-shock induction of these operons. In Streptococcus equi subsp. zooepidemicus (strain MGCS10565), this protein is Heat-inducible transcription repressor HrcA.